The chain runs to 214 residues: Phosphatidylserine decarboxylase proenzyme (214 aa).

Ser182 acts as the Schiff-base intermediate with substrate; via pyruvic acid in catalysis. Ser182 bears the Pyruvic acid (Ser); by autocatalysis mark.

It belongs to the phosphatidylserine decarboxylase family. PSD-A subfamily. Heterodimer of a large membrane-associated beta subunit and a small pyruvoyl-containing alpha subunit. Pyruvate is required as a cofactor. Is synthesized initially as an inactive proenzyme. Formation of the active enzyme involves a self-maturation process in which the active site pyruvoyl group is generated from an internal serine residue via an autocatalytic post-translational modification. Two non-identical subunits are generated from the proenzyme in this reaction, and the pyruvate is formed at the N-terminus of the alpha chain, which is derived from the carboxyl end of the proenzyme. The post-translation cleavage follows an unusual pathway, termed non-hydrolytic serinolysis, in which the side chain hydroxyl group of the serine supplies its oxygen atom to form the C-terminus of the beta chain, while the remainder of the serine residue undergoes an oxidative deamination to produce ammonia and the pyruvoyl prosthetic group on the alpha chain.

It is found in the cell membrane. It catalyses the reaction a 1,2-diacyl-sn-glycero-3-phospho-L-serine + H(+) = a 1,2-diacyl-sn-glycero-3-phosphoethanolamine + CO2. The protein operates within phospholipid metabolism; phosphatidylethanolamine biosynthesis; phosphatidylethanolamine from CDP-diacylglycerol: step 2/2. In terms of biological role, catalyzes the formation of phosphatidylethanolamine (PtdEtn) from phosphatidylserine (PtdSer). The protein is Phosphatidylserine decarboxylase proenzyme of Solidesulfovibrio magneticus (strain ATCC 700980 / DSM 13731 / RS-1) (Desulfovibrio magneticus).